The chain runs to 410 residues: Formyl-CoA:oxalate CoA-transferase (410 aa).

Residues 18 to 19, 72 to 75, 96 to 98, R104, and 136 to 139 contribute to the CoA site; these read QS, LNTK, NFG, and KAYE. Residue D168 is the Nucleophile of the active site. Residues 221–245 are disordered; that stretch reads PLAEYPNEDFGDEVPRSGNASGGGQ. A substrate-binding site is contributed by 243-245; sequence GGQ.

Belongs to the CoA-transferase III family. Frc subfamily. Homodimer.

The enzyme catalyses formyl-CoA + oxalate = oxalyl-CoA + formate. It functions in the pathway metabolic intermediate degradation; oxalate degradation; CO(2) and formate from oxalate: step 1/2. In terms of biological role, involved in the catabolism of oxalate and in the adapatation to low pH via the induction of the oxalate-dependent acid tolerance response (ATR). Catalyzes the transfer of the CoA moiety from formyl-CoA to oxalate. This is Formyl-CoA:oxalate CoA-transferase from Streptomyces coelicolor (strain ATCC BAA-471 / A3(2) / M145).